A 567-amino-acid chain; its full sequence is MSNISRQAYADMFGPTTGDKIRLADTELWIEVEDDLTTYGEEVKFGGGKVIRDGMGQGQMLSAGCADLVLTNALIIDYWGIVKADIGVKDGRIFAIGKAGNPDIQPNVTIPIGVSTEIIAAEGRIVTAGGVDTHIHWICPQQAEEALTSGITTMIGGGTGPTAGSNATTCTPGPWYIYQMLQAADSLPVNIGLLGKGNCSNPDALREQVAAGVIGLKIHEDWGATPAVINCALTVADEMDVQVALHSDTLNESGFVEDTLTAIGGRTIHTFHTEGAGGGHAPDIITACAHPNILPSSTNPTLPYTVNTIDEHLDMLMVCHHLDPDIAEDVAFAESRIRQETIAAEDVLHDLGAFSLTSSDSQAMGRVGEVVLRTWQVAHRMKVQRGPLPEESGDNDNVRVKRYIAKYTINPALTHGIAHEVGSIEVGKLADLVLWSPAFFGVKPATIVKGGMIAMAPMGDINGSIPTPQPVHYRPMFAALGSARHRCRVTFLSQAAAANGVAEQLNLHSTTAVVKGCRTVQKADMRHNSLLPDITVDSQTYEVRINGELITSEPADILPMAQRYFLF.

In terms of domain architecture, Urease spans 129-567; sequence GGVDTHIHWI…LPMAQRYFLF (439 aa). Ni(2+) contacts are provided by His-134, His-136, and Lys-217. Lys-217 carries the post-translational modification N6-carboxylysine. His-219 is a binding site for substrate. Ni(2+) contacts are provided by His-246 and His-272. Catalysis depends on His-320, which acts as the Proton donor. Asp-360 lines the Ni(2+) pocket.

Belongs to the metallo-dependent hydrolases superfamily. Urease alpha subunit family. Heterotrimer of UreA (gamma), UreB (beta) and UreC (alpha) subunits. Three heterotrimers associate to form the active enzyme. Ni cation serves as cofactor. Post-translationally, carboxylation allows a single lysine to coordinate two nickel ions.

The protein resides in the cytoplasm. It carries out the reaction urea + 2 H2O + H(+) = hydrogencarbonate + 2 NH4(+). It participates in nitrogen metabolism; urea degradation; CO(2) and NH(3) from urea (urease route): step 1/1. The sequence is that of Urease subunit alpha from Escherichia coli O157:H7.